We begin with the raw amino-acid sequence, 785 residues long: Pre-tRNA-processing protein PTA1 (785 aa).

The tract at residues 487-544 (INSVPSSSSSKRKSDDDDDGNDNEEVGNDGPTANSKKIKMETEPLAEEPEEPEDDDRM) is disordered. At Ser500 the chain carries Phosphoserine. Composition is skewed to acidic residues over residues 502 to 513 (DDDDGNDNEEVG) and 530 to 542 (PLAE…EDDD).

Component of the cleavage and polyadenylation factor (CPF) complex, which is composed of PTI1, SYC1, SSU72, GLC7, MPE1, REF2, PFS2, PTA1, YSH1/BRR5, SWD2, CFT2/YDH1, YTH1, CFT1/YHH1, FIP1 and PAP1. Component of the APT complex, which is a subcomplex of CPF, and is composed of PTI1, SYC1, SSU72, GLC7, REF2, PTA1 and SWD2.

The protein resides in the nucleus. Functionally, essential in pre-tRNA processing. Component of the cleavage and polyadenylation factor (CPF) complex, which plays a key role in polyadenylation-dependent pre-mRNA 3'-end formation and cooperates with cleavage factors including the CFIA complex and NAB4/CFIB. Component of the APT complex, which may be involved in polyadenylation-independent transcript 3'-end formation. The chain is Pre-tRNA-processing protein PTA1 (PTA1) from Saccharomyces cerevisiae (strain ATCC 204508 / S288c) (Baker's yeast).